The chain runs to 398 residues: Enoyl-[acyl-carrier-protein] reductase [NADH] (398 aa).

Residues 48–53 (GASTGY), 74–75 (FE), 111–112 (DA), and 139–140 (LA) contribute to the NAD(+) site. Tyr-225 serves as a coordination point for substrate. The active-site Proton donor is Tyr-235. NAD(+) is bound by residues Lys-244 and 273–275 (VVT).

This sequence belongs to the TER reductase family. In terms of assembly, monomer.

It catalyses the reaction a 2,3-saturated acyl-[ACP] + NAD(+) = a (2E)-enoyl-[ACP] + NADH + H(+). The protein operates within lipid metabolism; fatty acid biosynthesis. Its function is as follows. Involved in the final reduction of the elongation cycle of fatty acid synthesis (FAS II). Catalyzes the reduction of a carbon-carbon double bond in an enoyl moiety that is covalently linked to an acyl carrier protein (ACP). This chain is Enoyl-[acyl-carrier-protein] reductase [NADH], found in Pseudomonas fluorescens (strain ATCC BAA-477 / NRRL B-23932 / Pf-5).